A 206-amino-acid polypeptide reads, in one-letter code: Small ribosomal subunit protein uS7 (206 aa).

Belongs to the universal ribosomal protein uS7 family. Component of the small ribosomal subunit.

Its subcellular location is the cytoplasm. Component of the small ribosomal subunit. The ribosome is a large ribonucleoprotein complex responsible for the synthesis of proteins in the cell. This chain is Small ribosomal subunit protein uS7, found in Entamoeba histolytica (strain ATCC 30459 / HM-1:IMSS / ABRM).